Reading from the N-terminus, the 1647-residue chain is Putative RNA exonuclease pqe-1 (1647 aa).

4 disordered regions span residues 1 to 199 (MFNG…QVQN), 274 to 393 (QTPA…TSLP), 515 to 619 (MMQQ…KPVI), and 641 to 665 (QVKQ…PTAR). Composition is skewed to low complexity over residues 30-64 (GPSQ…SGAS) and 99-131 (TQPQ…AAAA). Positions 143-170 (SREQGNAHQPTAGQIPQSSNQPAQQTHN) are enriched in polar residues. 2 stretches are compositionally biased toward low complexity: residues 274-297 (QTPA…NPQQ) and 515-526 (MMQQQAMQMQMQ). Positions 527-540 (NPPPVHQQPPPQQP) are enriched in pro residues. The segment covering 541 to 555 (PQQQRQKQQRSQPAP) has biased composition (low complexity). Positions 592 to 601 (SKIEPVDVKP) are enriched in basic and acidic residues. A compositionally biased stretch (low complexity) spans 650 to 664 (SSTSDATKSDAAPTA). The stretch at 686–726 (SAKKFERMKAEAEDKEDMKKKIAALQEALFNIQEERRVEKE) forms a coiled coil. Residues 736–756 (AVPQNQPASSVQIAQVSTSES) are compositionally biased toward polar residues. Residues 736–1174 (AVPQNQPASS…LRNKKHTTEE (439 aa)) form a disordered region. A compositionally biased stretch (low complexity) spans 761–772 (TSEAAATETMTS). The segment covering 783 to 793 (TEGEQEEDEDE) has biased composition (acidic residues). The span at 822-833 (RSDEKREKRHVS) shows a compositional bias: basic and acidic residues. Acidic residues predominate over residues 878–905 (DNEDDDADSFVVGDDEPIEYEEEDEDDM). The segment covering 977–992 (TPTASSSMSSSTLSYC) has biased composition (low complexity). Basic and acidic residues predominate over residues 1018-1031 (KTREENRERKRLAQ). The span at 1038 to 1054 (SETTGVRRTLRSTQDNS) shows a compositional bias: polar residues. 2 stretches are compositionally biased toward basic and acidic residues: residues 1076 to 1088 (AKSS…EKQK) and 1139 to 1174 (NHTE…TTEE). A coiled-coil region spans residues 1142–1187 (EMLDKRNKESEEKRRKDRDELERLRNKKHTTEEEKIKMARLQNALK). One can recognise an Exonuclease domain in the interval 1477–1637 (RVYALDCEMV…IFYGLRNPES (161 aa)).

The protein belongs to the REXO1/REXO3 family. In terms of tissue distribution, expressed in the excretory canal, vulval cells, the intestine and in head and tail neurons including ASH, RIC and AIZ neurons.

The protein localises to the nucleus. Functionally, putative RNA exonuclease which protects neurons from the toxic effects of expanded poly-Q disease proteins. It is unknown whether this is via participation in the pathogenic mechanism underlying poly-Q-induced neurodegeneration or if it is by acting as a genetic modifier of the age of onset or progression of neurodegeneration. Regulates gene expression in neurons. The chain is Putative RNA exonuclease pqe-1 from Caenorhabditis elegans.